The chain runs to 437 residues: Methylenetetrahydrofolate--tRNA-(uracil-5-)-methyltransferase TrmFO (437 aa).

Residue 10–15 (GAGLAG) coordinates FAD.

The protein belongs to the MnmG family. TrmFO subfamily. The cofactor is FAD.

Its subcellular location is the cytoplasm. The catalysed reaction is uridine(54) in tRNA + (6R)-5,10-methylene-5,6,7,8-tetrahydrofolate + NADH + H(+) = 5-methyluridine(54) in tRNA + (6S)-5,6,7,8-tetrahydrofolate + NAD(+). It catalyses the reaction uridine(54) in tRNA + (6R)-5,10-methylene-5,6,7,8-tetrahydrofolate + NADPH + H(+) = 5-methyluridine(54) in tRNA + (6S)-5,6,7,8-tetrahydrofolate + NADP(+). Its function is as follows. Catalyzes the folate-dependent formation of 5-methyl-uridine at position 54 (M-5-U54) in all tRNAs. This is Methylenetetrahydrofolate--tRNA-(uracil-5-)-methyltransferase TrmFO from Brevibacillus brevis (strain 47 / JCM 6285 / NBRC 100599).